Consider the following 778-residue polypeptide: Dolichyl-phosphate-mannose--protein mannosyltransferase 4 (778 aa).

Residues 1 to 28 are compositionally biased toward basic and acidic residues; sequence MASKSEKAVKKAQKLSKEPSVELTDTKS. A disordered region spans residues 1–44; that stretch reads MASKSEKAVKKAQKLSKEPSVELTDTKSSDNVTPKQKSPNSTEE. Positions 29–41 are enriched in polar residues; sequence SDNVTPKQKSPNS. A glycan (N-linked (GlcNAc...) asparagine) is linked at N40. The next 7 helical transmembrane spans lie at 60–80, 103–123, 145–165, 196–216, 223–243, 248–268, and 288–308; these read LAFV…LNLP, FFDL…KLAG, VTIR…VFLI, ILLD…YVRF, PFSR…SCTI, VGFF…WYLW, and FCLI…HFNI. A glycan (N-linked (GlcNAc...) asparagine) is linked at N335. MIR domains lie at 336 to 396, 408 to 467, and 474 to 529; these read STIL…ILPA, NVPV…VVMS, and RPLY…FDDI. 4 helical membrane passes run 608–628, 644–664, 669–689, and 726–746; these read WWII…EILL, FYRS…PFFI, LFLH…GAFI, and VIEL…FTFF.

This sequence belongs to the glycosyltransferase 39 family.

It localises to the endoplasmic reticulum membrane. It carries out the reaction a di-trans,poly-cis-dolichyl beta-D-mannosyl phosphate + L-seryl-[protein] = 3-O-(alpha-D-mannosyl)-L-seryl-[protein] + a di-trans,poly-cis-dolichyl phosphate + H(+). The catalysed reaction is a di-trans,poly-cis-dolichyl beta-D-mannosyl phosphate + L-threonyl-[protein] = 3-O-(alpha-D-mannosyl)-L-threonyl-[protein] + a di-trans,poly-cis-dolichyl phosphate + H(+). Its pathway is protein modification; protein glycosylation. In terms of biological role, transfers mannose from Dol-P-mannose to Ser or Thr residues on proteins. Required for normal cell wall and septum formation. This is Dolichyl-phosphate-mannose--protein mannosyltransferase 4 (ogm4) from Schizosaccharomyces pombe (strain 972 / ATCC 24843) (Fission yeast).